The chain runs to 256 residues: Ubiquinone/menaquinone biosynthesis C-methyltransferase UbiE (256 aa).

Positions 1–12 are enriched in basic and acidic residues; sequence MTDPRKGDHAEP. The disordered stretch occupies residues 1 to 21; that stretch reads MTDPRKGDHAEPTTHFGYQDV. Residues threonine 79, aspartate 100, and 128–129 contribute to the S-adenosyl-L-methionine site; that span reads DA.

It belongs to the class I-like SAM-binding methyltransferase superfamily. MenG/UbiE family.

The enzyme catalyses a 2-demethylmenaquinol + S-adenosyl-L-methionine = a menaquinol + S-adenosyl-L-homocysteine + H(+). It carries out the reaction a 2-methoxy-6-(all-trans-polyprenyl)benzene-1,4-diol + S-adenosyl-L-methionine = a 5-methoxy-2-methyl-3-(all-trans-polyprenyl)benzene-1,4-diol + S-adenosyl-L-homocysteine + H(+). Its pathway is quinol/quinone metabolism; menaquinone biosynthesis; menaquinol from 1,4-dihydroxy-2-naphthoate: step 2/2. It participates in cofactor biosynthesis; ubiquinone biosynthesis. Its function is as follows. Methyltransferase required for the conversion of demethylmenaquinol (DMKH2) to menaquinol (MKH2) and the conversion of 2-polyprenyl-6-methoxy-1,4-benzoquinol (DDMQH2) to 2-polyprenyl-3-methyl-6-methoxy-1,4-benzoquinol (DMQH2). The sequence is that of Ubiquinone/menaquinone biosynthesis C-methyltransferase UbiE from Pseudomonas entomophila (strain L48).